A 203-amino-acid chain; its full sequence is Ras-related protein Rab-13 (203 aa).

Ser17, Gly18, Gly20, Lys21, Thr22, Cys23, and Thr40 together coordinate GTP. Thr22 contributes to the Mg(2+) binding site. Residues Asp31–Phe45 carry the Switch 1 motif. Position 40 (Thr40) interacts with Mg(2+). Residues Lys46 and Lys58 each participate in a glycyl lysine isopeptide (Lys-Gly) (interchain with G-Cter in ubiquitin) cross-link. Asp63 provides a ligand contact to Mg(2+). The Switch 2 signature appears at Asp63–Gly80. GTP contacts are provided by Gly66, Asn121, Lys122, Asp124, Ala152, and Lys153. Residues Ser173–Gly203 are disordered. A Phosphoserine modification is found at Ser178. Cysteine methyl ester is present on Cys200. The S-geranylgeranyl cysteine moiety is linked to residue Cys200. Positions Ser201–Gly203 are cleaved as a propeptide — removed in mature form.

The protein belongs to the small GTPase superfamily. Rab family. Interacts (GTP-bound form) with MICALL2; competes with RAB8A and is involved in tight junctions assembly. Interacts (GTP-bound form) with MICALL1. Interacts (GTP-bound form) with MICAL1, MICAL3, MICALCL, EHBP1 and EHBP1L1; ternary complexes of RAB8A, RAB13 and either MICAL1 or EHBP1L1 are possible. Interacts with PRKACA; downstream effector of RAB13 involved in tight junction assembly. Interacts with GRB2; may recruit RAB13 to the leading edge of migrating endothelial cells where it can activate RHOA. Interacts (isoprenylated form) with PDE6D; dissociates RAB13 from membranes. Interacts with BICDL2/BICDR2. Interacts with LEPROT and LEPROTL1. It depends on Mg(2+) as a cofactor. In terms of processing, ubiquitinated via 'Lys-11'-linked ubiquitination on Lys-46 and Lys-58; impairing the recruitment of guanosine diphosphate (GDP) dissociation inhibitor 1/GDI1.

It localises to the cell membrane. Its subcellular location is the cytoplasmic vesicle membrane. The protein localises to the cell junction. It is found in the tight junction. The protein resides in the golgi apparatus. It localises to the trans-Golgi network membrane. Its subcellular location is the recycling endosome membrane. The protein localises to the cell projection. It is found in the lamellipodium. It carries out the reaction GTP + H2O = GDP + phosphate + H(+). Its activity is regulated as follows. Regulated by guanine nucleotide exchange factors (GEFs) including DENND1C, which promote the exchange of bound GDP for free GTP. Regulated by GTPase activating proteins (GAPs) which increase the GTP hydrolysis activity. Inhibited by GDP dissociation inhibitors (GDIs). Activated in response to insulin. The small GTPases Rab are key regulators of intracellular membrane trafficking, from the formation of transport vesicles to their fusion with membranes. Rabs cycle between an inactive GDP-bound form and an active GTP-bound form that is able to recruit to membranes different sets of downstream effectors directly responsible for vesicle formation, movement, tethering and fusion. RAB13 is involved in endocytic recycling and regulates the transport to the plasma membrane of transmembrane proteins like the tight junction protein OCLN/occludin. Thereby, it regulates the assembly and the activity of tight junctions. Moreover, it may also regulate tight junction assembly by activating the PKA signaling pathway and by reorganizing the actin cytoskeleton through the activation of the downstream effectors PRKACA and MICALL2 respectively. Through its role in tight junction assembly, may play a role in the establishment of Sertoli cell barrier. Plays also a role in angiogenesis through regulation of endothelial cells chemotaxis. Also involved in neurite outgrowth. Has also been proposed to play a role in post-Golgi membrane trafficking from the TGN to the recycling endosome. Finally, it has been involved in insulin-induced transport to the plasma membrane of the glucose transporter GLUT4 and therefore may play a role in glucose homeostasis. The chain is Ras-related protein Rab-13 (RAB13) from Canis lupus familiaris (Dog).